Consider the following 434-residue polypeptide: Serine protease HTRA2, mitochondrial (434 aa).

Positions 34–65 are disordered; sequence YSNNTANITTDSSSSSNNNSNRNNKNDNNNED. A compositionally biased stretch (low complexity) spans 35–60; the sequence is SNNTANITTDSSSSSNNNSNRNNKND. A helical membrane pass occupies residues 74–92; sequence LVRFFVPFSLGAVASSLVM. Residues 85 to 88 carry the IAP-binding motif; that stretch reads AVAS. Residues 151–314 are serine protease; that stretch reads SNGSGFVIEQ…IPIDYVKVFL (164 aa). Catalysis depends on charge relay system residues histidine 169, aspartate 201, and serine 278. One can recognise a PDZ domain in the interval 337 to 424; sequence MGITMLTLTP…NMIIMRGVKQ (88 aa).

This sequence belongs to the peptidase S1C family. In terms of assembly, interacts with th/DIAP1 (via BIR 2 domain).

Its subcellular location is the mitochondrion intermembrane space. It localises to the mitochondrion membrane. It carries out the reaction Cleavage of non-polar aliphatic amino-acids at the P1 position, with a preference for Val, Ile and Met. At the P2 and P3 positions, Arg is selected most strongly with a secondary preference for other hydrophilic residues.. In terms of biological role, serine protease that shows proteolytic activity against a non-specific substrate beta-casein. Promotes or induces cell death either by direct binding to and inhibition of BIRC proteins (also called inhibitor of apoptosis proteins, IAPs), leading to an increase in caspase activity, or by a BIRC inhibition-independent, caspase-independent and serine protease activity-dependent mechanism. Can antagonize antiapoptotic activity of th/Diap1 by directly inducing the degradation of th/Diap1. In Drosophila willistoni (Fruit fly), this protein is Serine protease HTRA2, mitochondrial.